Consider the following 257-residue polypeptide: MDRIIEKLESGWWIVSHEQKLWLPYGELPHGLAANFDLVGQRALRIGEWQGEPVWLVLQHRRHDMGSVRQVIDQDAGLFQLAGRGVQLAEFYRSHKFCGYCGHPMHPSKTEWAMLCSHCRERYYPQIAPCIIVAIRREDSILLAQHVRHRNGVHTVLAGFVEVGETLEQAVAREVMEESGIKVKNLRYVTSQPWPFPQSLMTAFMAEYDSGEIAIDPKELLEANWYHYDDLPLLPPPGTVARRLIEDTVAMCRAEYD.

Arg-69 provides a ligand contact to substrate. Cys-98 and Cys-101 together coordinate Zn(2+). Substrate is bound at residue Glu-111. Cys-116 and Cys-119 together coordinate Zn(2+). Position 124 (Tyr-124) interacts with substrate. Residues 125–248 enclose the Nudix hydrolase domain; it reads PQIAPCIIVA…TVARRLIEDT (124 aa). Positions 158, 174, and 178 each coordinate a divalent metal cation. The Nudix box motif lies at 159-180; that stretch reads GFVEVGETLEQAVAREVMEESG. Position 192–199 (192–199) interacts with substrate; sequence QPWPFPQS. An a divalent metal cation-binding site is contributed by Glu-219. Ala-241 contributes to the substrate binding site.

Belongs to the Nudix hydrolase family. NudC subfamily. In terms of assembly, homodimer. Requires Mg(2+) as cofactor. Mn(2+) is required as a cofactor. It depends on Zn(2+) as a cofactor.

It catalyses the reaction a 5'-end NAD(+)-phospho-ribonucleoside in mRNA + H2O = a 5'-end phospho-adenosine-phospho-ribonucleoside in mRNA + beta-nicotinamide D-ribonucleotide + 2 H(+). The catalysed reaction is NAD(+) + H2O = beta-nicotinamide D-ribonucleotide + AMP + 2 H(+). The enzyme catalyses NADH + H2O = reduced beta-nicotinamide D-ribonucleotide + AMP + 2 H(+). MRNA decapping enzyme that specifically removes the nicotinamide adenine dinucleotide (NAD) cap from a subset of mRNAs by hydrolyzing the diphosphate linkage to produce nicotinamide mononucleotide (NMN) and 5' monophosphate mRNA. The NAD-cap is present at the 5'-end of some mRNAs and stabilizes RNA against 5'-processing. Has preference for mRNAs with a 5'-end purine. Catalyzes the hydrolysis of a broad range of dinucleotide pyrophosphates. The sequence is that of NAD-capped RNA hydrolase NudC from Salmonella choleraesuis (strain SC-B67).